Consider the following 168-residue polypeptide: 2-C-methyl-D-erythritol 2,4-cyclodiphosphate synthase (168 aa).

2 residues coordinate a divalent metal cation: aspartate 13 and histidine 15. 4-CDP-2-C-methyl-D-erythritol 2-phosphate is bound by residues 13–15 (DVH) and 39–40 (HS). Histidine 47 is a binding site for a divalent metal cation. 4-CDP-2-C-methyl-D-erythritol 2-phosphate-binding positions include 61-63 (DIG), 66-70 (FPDTD), phenylalanine 144, and lysine 147.

The protein belongs to the IspF family. In terms of assembly, homotrimer. A divalent metal cation is required as a cofactor.

It carries out the reaction 4-CDP-2-C-methyl-D-erythritol 2-phosphate = 2-C-methyl-D-erythritol 2,4-cyclic diphosphate + CMP. Its pathway is isoprenoid biosynthesis; isopentenyl diphosphate biosynthesis via DXP pathway; isopentenyl diphosphate from 1-deoxy-D-xylulose 5-phosphate: step 4/6. Involved in the biosynthesis of isopentenyl diphosphate (IPP) and dimethylallyl diphosphate (DMAPP), two major building blocks of isoprenoid compounds. Catalyzes the conversion of 4-diphosphocytidyl-2-C-methyl-D-erythritol 2-phosphate (CDP-ME2P) to 2-C-methyl-D-erythritol 2,4-cyclodiphosphate (ME-CPP) with a corresponding release of cytidine 5-monophosphate (CMP). This Cupriavidus metallidurans (strain ATCC 43123 / DSM 2839 / NBRC 102507 / CH34) (Ralstonia metallidurans) protein is 2-C-methyl-D-erythritol 2,4-cyclodiphosphate synthase.